The following is a 30-amino-acid chain: Photosystem I reaction center subunit XII (30 aa).

The chain crosses the membrane as a helical span at residues 6-26; the sequence is VFTILAIALVPAVMALLLGSA.

Belongs to the PsaM family.

The protein resides in the cellular thylakoid membrane. This chain is Photosystem I reaction center subunit XII, found in Synechococcus sp. (strain JA-2-3B'a(2-13)) (Cyanobacteria bacterium Yellowstone B-Prime).